Consider the following 412-residue polypeptide: CinA-like protein (412 aa).

It belongs to the CinA family.

This Syntrophotalea carbinolica (strain DSM 2380 / NBRC 103641 / GraBd1) (Pelobacter carbinolicus) protein is CinA-like protein.